The primary structure comprises 247 residues: 4-hydroxy-tetrahydrodipicolinate reductase (247 aa).

NAD(+) is bound by residues 9–14 (GAAGRM), 76–78 (GTT), and 103–106 (APNF). Catalysis depends on His133, which acts as the Proton donor/acceptor. His134 provides a ligand contact to (S)-2,3,4,5-tetrahydrodipicolinate. The Proton donor role is filled by Lys137. A (S)-2,3,4,5-tetrahydrodipicolinate-binding site is contributed by 143–144 (GT).

It belongs to the DapB family.

Its subcellular location is the cytoplasm. The enzyme catalyses (S)-2,3,4,5-tetrahydrodipicolinate + NAD(+) + H2O = (2S,4S)-4-hydroxy-2,3,4,5-tetrahydrodipicolinate + NADH + H(+). It carries out the reaction (S)-2,3,4,5-tetrahydrodipicolinate + NADP(+) + H2O = (2S,4S)-4-hydroxy-2,3,4,5-tetrahydrodipicolinate + NADPH + H(+). Its pathway is amino-acid biosynthesis; L-lysine biosynthesis via DAP pathway; (S)-tetrahydrodipicolinate from L-aspartate: step 4/4. Catalyzes the conversion of 4-hydroxy-tetrahydrodipicolinate (HTPA) to tetrahydrodipicolinate. The polypeptide is 4-hydroxy-tetrahydrodipicolinate reductase (Beutenbergia cavernae (strain ATCC BAA-8 / DSM 12333 / CCUG 43141 / JCM 11478 / NBRC 16432 / NCIMB 13614 / HKI 0122)).